The following is a 444-amino-acid chain: MTVDHAEQGLGVVSEAAAQVDGLGLALTDHPQIRGALVLSTCNRVCLIVETSPEAVAQGFDEAALRRCIADHGANVLAESAQLVCENDAVWRLFRVAAGMESMVFGEREVAGQMKRALSEARREQTVSYTIGHVVEEALKTSRHVATETALAAEGRTVVAVGLDLVAQRMDLDGARVLVMGTGSYAGASCAQLSSRGVAEIQVHSASGRAAGFARRHRVSEALDIDAALAQADLVVTCRGSGVPALSAEAARRAVDARRGRDLMVLDLAISGDVEEPVPAGVEVIDLETIRQAVPASAEAERAAAEHIIATGVRHFAVDLERRRMAPAVVALRDVISDLVTAELERLPEEGSVPVDEVAASLRRLAASMAHIPSARARMASEQGLGDRWLNSLSDVLGIDVDIAAPVIDMSSFANADCMTCPVTGLRVEDLATDAAPRGEERTS.

Substrate-binding positions include 41-44 (TCNR), Ser102, 107-109 (ERE), and Gln113. The active-site Nucleophile is Cys42. 181 to 186 (GTGSYA) contributes to the NADP(+) binding site.

Belongs to the glutamyl-tRNA reductase family. Homodimer.

It carries out the reaction (S)-4-amino-5-oxopentanoate + tRNA(Glu) + NADP(+) = L-glutamyl-tRNA(Glu) + NADPH + H(+). Its pathway is porphyrin-containing compound metabolism; protoporphyrin-IX biosynthesis; 5-aminolevulinate from L-glutamyl-tRNA(Glu): step 1/2. Catalyzes the NADPH-dependent reduction of glutamyl-tRNA(Glu) to glutamate 1-semialdehyde (GSA). The chain is Glutamyl-tRNA reductase from Cutibacterium acnes (strain DSM 16379 / KPA171202) (Propionibacterium acnes).